The primary structure comprises 404 residues: MKSCVLAYSGGLDTSVILGWLQDQGYEVHCVYVDLGQPCEDRDAIMEKARTCGAKSSRLVDVREELCRDFAFPVLAWQAKYEQIYLLGTSIARPLISKVCLEVAREVGATAYAHGATGKGNDQCRFQLAAEALDPNIEMIAPWRIKSFRDAFPGRTELIEYCDVKRIPVKASTAKPYSSDENVLHISYEAGKLEELDVNGVELVEFGMGVSPQDAPDKPEEVTIGFESGVPKTLNGKAVNALEMVEQLNDIAGRNGVGRIDMVENRFVGMKSRGVYESPGMTVLYDALMYVEQLTMDRDLMHLRDRMAPEVAEMVYYGFWYTPKMDALMSFIETAQRPVTGEVTLQLYKGNIMVSSRTSPNSLYDEEIATMEGGGSYNQDDAEGFLRIQGLPSRVQGRVSPRKF.

ATP is bound at residue 7-15 (AYSGGLDTS). L-citrulline-binding residues include Y85 and S90. An ATP-binding site is contributed by G115. Positions 117, 121, and 122 each coordinate L-aspartate. Position 121 (N121) interacts with L-citrulline. Residues R125, S178, S187, E264, and Y276 each coordinate L-citrulline.

This sequence belongs to the argininosuccinate synthase family. Type 1 subfamily. As to quaternary structure, homotetramer.

The protein resides in the cytoplasm. The enzyme catalyses L-citrulline + L-aspartate + ATP = 2-(N(omega)-L-arginino)succinate + AMP + diphosphate + H(+). It participates in amino-acid biosynthesis; L-arginine biosynthesis; L-arginine from L-ornithine and carbamoyl phosphate: step 2/3. In Rhodopirellula baltica (strain DSM 10527 / NCIMB 13988 / SH1), this protein is Argininosuccinate synthase.